The chain runs to 392 residues: Acetyl-CoA acetyltransferase (392 aa).

Cys89 (acyl-thioester intermediate) is an active-site residue. Active-site proton acceptor residues include His348 and Cys378.

The protein belongs to the thiolase-like superfamily. Thiolase family. Homotetramer.

Its subcellular location is the cytoplasm. The catalysed reaction is 2 acetyl-CoA = acetoacetyl-CoA + CoA. The protein operates within biopolymer metabolism; poly-(R)-3-hydroxybutanoate biosynthesis. Its pathway is metabolic intermediate biosynthesis; (R)-mevalonate biosynthesis; (R)-mevalonate from acetyl-CoA: step 1/3. This Shinella zoogloeoides (Crabtreella saccharophila) protein is Acetyl-CoA acetyltransferase.